Consider the following 151-residue polypeptide: uncharacterized protein (151 aa).

The span at 40 to 57 (QMNRRNSENNTFDASNVG) shows a compositional bias: polar residues. Residues 40–125 (QMNRRNSENN…KRQPHYAEPI (86 aa)) are disordered. The segment covering 83 to 110 (QRQNGRQHQHAGQQQPQHQHTQSQTRQT) has biased composition (low complexity).

This is an uncharacterized protein from Bacillus subtilis (strain 168).